We begin with the raw amino-acid sequence, 202 residues long: Holliday junction resolvase RecU (202 aa).

Positions 85, 87, 100, and 119 each coordinate Mg(2+).

Belongs to the RecU family. Requires Mg(2+) as cofactor.

It is found in the cytoplasm. The enzyme catalyses Endonucleolytic cleavage at a junction such as a reciprocal single-stranded crossover between two homologous DNA duplexes (Holliday junction).. Its function is as follows. Endonuclease that resolves Holliday junction intermediates in genetic recombination. Cleaves mobile four-strand junctions by introducing symmetrical nicks in paired strands. Promotes annealing of linear ssDNA with homologous dsDNA. Required for DNA repair, homologous recombination and chromosome segregation. The sequence is that of Holliday junction resolvase RecU from Streptococcus equi subsp. zooepidemicus (strain H70).